The primary structure comprises 128 residues: Large ribosomal subunit protein eL22 (128 aa).

The protein belongs to the eukaryotic ribosomal protein eL22 family. Component of the large ribosomal subunit.

It localises to the cytoplasm. Its function is as follows. Component of the large ribosomal subunit. The ribosome is a large ribonucleoprotein complex responsible for the synthesis of proteins in the cell. This Xenopus tropicalis (Western clawed frog) protein is Large ribosomal subunit protein eL22 (rpl22).